Consider the following 138-residue polypeptide: Small ribosomal subunit protein uS11 (138 aa).

2 disordered regions span residues 1-29 (MPPK…PHGA) and 117-138 (GAIS…RRRV). Residues 13 to 22 (KGQKTRRREK) show a composition bias toward basic residues.

It belongs to the universal ribosomal protein uS11 family. As to quaternary structure, part of the 30S ribosomal subunit. Interacts with proteins S7 and S18. Binds to IF-3.

Its function is as follows. Located on the platform of the 30S subunit, it bridges several disparate RNA helices of the 16S rRNA. Forms part of the Shine-Dalgarno cleft in the 70S ribosome. The polypeptide is Small ribosomal subunit protein uS11 (Mycobacterium ulcerans (strain Agy99)).